A 195-amino-acid polypeptide reads, in one-letter code: Large ribosomal subunit protein uL5 (195 aa).

Residues 1–25 (MARVPPPALKKDKKEKKPPKDNSKN) are disordered.

Belongs to the universal ribosomal protein uL5 family. As to quaternary structure, component of the large ribosomal subunit.

The protein localises to the nucleus. It is found in the cytoplasm. In terms of biological role, component of the ribosome, a large ribonucleoprotein complex responsible for the synthesis of proteins in the cell. The small ribosomal subunit (SSU) binds messenger RNAs (mRNAs) and translates the encoded message by selecting cognate aminoacyl-transfer RNA (tRNA) molecules. The large subunit (LSU) contains the ribosomal catalytic site termed the peptidyl transferase center (PTC), which catalyzes the formation of peptide bonds, thereby polymerizing the amino acids delivered by tRNAs into a polypeptide chain. The nascent polypeptides leave the ribosome through a tunnel in the LSU and interact with protein factors that function in enzymatic processing, targeting, and the membrane insertion of nascent chains at the exit of the ribosomal tunnel. The sequence is that of Large ribosomal subunit protein uL5 (RpL11) from Spodoptera frugiperda (Fall armyworm).